We begin with the raw amino-acid sequence, 157 residues long: Peptide methionine sulfoxide reductase MsrA (157 aa).

Cys13 is an active-site residue.

This sequence belongs to the MsrA Met sulfoxide reductase family.

The catalysed reaction is L-methionyl-[protein] + [thioredoxin]-disulfide + H2O = L-methionyl-(S)-S-oxide-[protein] + [thioredoxin]-dithiol. It catalyses the reaction [thioredoxin]-disulfide + L-methionine + H2O = L-methionine (S)-S-oxide + [thioredoxin]-dithiol. Its function is as follows. Has an important function as a repair enzyme for proteins that have been inactivated by oxidation. Catalyzes the reversible oxidation-reduction of methionine sulfoxide in proteins to methionine. In Methanococcus maripaludis (strain C7 / ATCC BAA-1331), this protein is Peptide methionine sulfoxide reductase MsrA.